A 314-amino-acid chain; its full sequence is Olfactory receptor 14K1 (314 aa).

The Extracellular segment spans residues 1 to 23 (MTNQTQMMEFLLVRFTENWVLLR). Asparagine 3 is a glycosylation site (N-linked (GlcNAc...) asparagine). Residues 24 to 44 (LHALLFSLIYLTAVLMNLVII) form a helical membrane-spanning segment. Topologically, residues 45-52 (LLMILDHR) are cytoplasmic. The chain crosses the membrane as a helical span at residues 53–73 (LHMAMYFFLRHLSFLDLCLIS). The Extracellular portion of the chain corresponds to 74-97 (ATVPKSILNSVASTDSISFLGCVL). A disulfide bridge links cysteine 95 with cysteine 187. The chain crosses the membrane as a helical span at residues 98-118 (QLFLVVLLAGSEIGILTAMSY). At 119-131 (DRYAAICCPLHCE) the chain is on the cytoplasmic side. The helical transmembrane segment at 132-152 (AVMSRGLCVQLMALSWLNRGA) threads the bilayer. Over 153-194 (LGLLYTAGTFSLNFYGSDELHQFFCDVPALLKLTCSKEHAII) the chain is Extracellular. Residues 195-215 (SVSVAIGVCYAFSCLVCIVVS) form a helical membrane-spanning segment. Residues 216–235 (YVYIFSAVLRISQRQRQSKA) lie on the Cytoplasmic side of the membrane. Residues 236–256 (FSNCVPHLIVVTVFLVTGAVA) form a helical membrane-spanning segment. Topologically, residues 257–269 (YLKPGSDAPSILD) are extracellular. Residues 270–290 (LLVSVFYSVAPPTLNPVIYCL) form a helical membrane-spanning segment. Over 291–314 (KNKDIKSALSKVLWNVRSSGVMKR) the chain is Cytoplasmic.

This sequence belongs to the G-protein coupled receptor 1 family.

The protein resides in the cell membrane. Its function is as follows. Odorant receptor. In Homo sapiens (Human), this protein is Olfactory receptor 14K1 (OR14K1).